The chain runs to 232 residues: Phosphoadenosine 5'-phosphosulfate reductase (232 aa).

Cys228 serves as the catalytic Nucleophile; cysteine thiosulfonate intermediate.

Belongs to the PAPS reductase family. CysH subfamily.

The protein localises to the cytoplasm. It carries out the reaction [thioredoxin]-disulfide + sulfite + adenosine 3',5'-bisphosphate + 2 H(+) = [thioredoxin]-dithiol + 3'-phosphoadenylyl sulfate. It functions in the pathway sulfur metabolism; hydrogen sulfide biosynthesis; sulfite from sulfate: step 3/3. Functionally, catalyzes the formation of sulfite from phosphoadenosine 5'-phosphosulfate (PAPS) using thioredoxin as an electron donor. The sequence is that of Phosphoadenosine 5'-phosphosulfate reductase from Synechococcus sp. (strain ATCC 27144 / PCC 6301 / SAUG 1402/1) (Anacystis nidulans).